The chain runs to 483 residues: Serine/threonine-protein kinase BSK4 (483 aa).

Residue glycine 2 is the site of N-myristoyl glycine attachment. A Protein kinase domain is found at 56 to 322; sequence ENVVSEHGET…DTEVLSHVLM (267 aa). Residues 62 to 70 and lysine 84 each bind ATP; that span reads HGETAPNVV. Aspartate 178 (proton acceptor) is an active-site residue.

The protein belongs to the protein kinase superfamily. Ser/Thr protein kinase family.

The protein localises to the cell membrane. The enzyme catalyses L-seryl-[protein] + ATP = O-phospho-L-seryl-[protein] + ADP + H(+). It catalyses the reaction L-threonyl-[protein] + ATP = O-phospho-L-threonyl-[protein] + ADP + H(+). Probable serine/threonine kinase that acts as a positive regulator of brassinosteroid (BR) signaling downstream of the receptor kinase BRI1. Functions redundantly with BSK3, BSK6, BSK7 and BSK8. The protein is Serine/threonine-protein kinase BSK4 of Arabidopsis thaliana (Mouse-ear cress).